A 290-amino-acid polypeptide reads, in one-letter code: MEKRYELNKNLAQMLKDGVIMDVVNPEQAKIAEEAGAVAVMALERVPSDIRKQGGVARTSDPKMIKEIINAVSIPVMAKVRIGHFVEAQILEAIGVDYIDESEVLTPADDLFHINKKDFKVPFVCGARNLGEALRRIGEGASMIRTKGEAGTGNVVEAVRHMRTISSEMRKLQLTPKEELMTVAKEMGAPFNLIEYVAEKGRLPVINFAAGGIATPADAALMMQLGCDGIFVGSGIFKSDNPEKRAKAIVKATTYFKDPEVLAKASENLGGAMLGLEISKLETEFAERGW.

Asp22 is a D-ribose 5-phosphate binding site. Lys79 serves as the catalytic Schiff-base intermediate with D-ribose 5-phosphate. Gly151 contacts D-ribose 5-phosphate. Arg163 provides a ligand contact to D-glyceraldehyde 3-phosphate. Residues Gly212 and 233–234 (GS) contribute to the D-ribose 5-phosphate site.

Belongs to the PdxS/SNZ family. As to quaternary structure, in the presence of PdxT, forms a dodecamer of heterodimers.

The enzyme catalyses aldehydo-D-ribose 5-phosphate + D-glyceraldehyde 3-phosphate + L-glutamine = pyridoxal 5'-phosphate + L-glutamate + phosphate + 3 H2O + H(+). Its pathway is cofactor biosynthesis; pyridoxal 5'-phosphate biosynthesis. Functionally, catalyzes the formation of pyridoxal 5'-phosphate from ribose 5-phosphate (RBP), glyceraldehyde 3-phosphate (G3P) and ammonia. The ammonia is provided by the PdxT subunit. Can also use ribulose 5-phosphate and dihydroxyacetone phosphate as substrates, resulting from enzyme-catalyzed isomerization of RBP and G3P, respectively. This Clostridium botulinum (strain Loch Maree / Type A3) protein is Pyridoxal 5'-phosphate synthase subunit PdxS.